Here is a 369-residue protein sequence, read N- to C-terminus: Delta(12)-oleate desaturase (369 aa).

2 helical membrane passes run 41–61 (LLSD…YFPL) and 69–89 (IAWP…WVIA). The short motif at 90-94 (HECGH) is the Histidine box-1 element. A helical membrane pass occupies residues 102 to 122 (LIDDIVGLFFHSALLVPYFSW). The Histidine box-2 motif lies at 126–130 (HRRHH). The next 3 membrane-spanning stretches (helical) occupy residues 164–184 (LISL…FNMS), 207–227 (WIQV…LYRI), and 234–254 (FWVM…LVLI). Residues 300 to 304 (HVVHH) carry the Histidine box-3 motif.

Belongs to the fatty acid desaturase type 1 family.

Its subcellular location is the membrane. The protein operates within lipid metabolism; polyunsaturated fatty acid biosynthesis. Functionally, delta(12)-fatty acid desaturase producing in a heterologous system linoleic acid (18:2(9Z,12Z)) and to a lower extent hexadecadienoic acid (16:2(9Z,12Z)). In Trichosanthes kirilowii (Chinese snake gourd), this protein is Delta(12)-oleate desaturase.